A 117-amino-acid chain; its full sequence is UPF0344 protein GTNG_0604 (117 aa).

4 helical membrane-spanning segments follow: residues 1 to 21, 39 to 59, 61 to 81, and 97 to 117; these read MTHA…IAVS, LFYI…ASIS, LYWL…MVLV, and VIAL…FDLF.

The protein belongs to the UPF0344 family.

Its subcellular location is the cell membrane. This Geobacillus thermodenitrificans (strain NG80-2) protein is UPF0344 protein GTNG_0604.